Consider the following 97-residue polypeptide: Putative pterin-4-alpha-carbinolamine dehydratase (97 aa).

The protein belongs to the pterin-4-alpha-carbinolamine dehydratase family.

The catalysed reaction is (4aS,6R)-4a-hydroxy-L-erythro-5,6,7,8-tetrahydrobiopterin = (6R)-L-erythro-6,7-dihydrobiopterin + H2O. The sequence is that of Putative pterin-4-alpha-carbinolamine dehydratase from Cyanothece sp. (strain PCC 7425 / ATCC 29141).